The sequence spans 172 residues: RNA pyrophosphohydrolase (172 aa).

In terms of domain architecture, Nudix hydrolase spans 6–149; the sequence is GFRANVGIII…KRDVYRKVMK (144 aa). Residues 38-59 carry the Nudix box motif; that stretch reads GGVDEGETPEEAMFRELYEEVG.

Belongs to the Nudix hydrolase family. RppH subfamily. The cofactor is a divalent metal cation.

Its function is as follows. Accelerates the degradation of transcripts by removing pyrophosphate from the 5'-end of triphosphorylated RNA, leading to a more labile monophosphorylated state that can stimulate subsequent ribonuclease cleavage. The chain is RNA pyrophosphohydrolase from Shewanella sediminis (strain HAW-EB3).